Consider the following 118-residue polypeptide: Small ribosomal subunit protein uS13 (118 aa).

The segment at 94–118 is disordered; the sequence is SLPLRGQRTKTNARTRKGPRKPIKK.

This sequence belongs to the universal ribosomal protein uS13 family. Part of the 30S ribosomal subunit. Forms a loose heterodimer with protein S19. Forms two bridges to the 50S subunit in the 70S ribosome.

Its function is as follows. Located at the top of the head of the 30S subunit, it contacts several helices of the 16S rRNA. In the 70S ribosome it contacts the 23S rRNA (bridge B1a) and protein L5 of the 50S subunit (bridge B1b), connecting the 2 subunits; these bridges are implicated in subunit movement. Contacts the tRNAs in the A and P-sites. The polypeptide is Small ribosomal subunit protein uS13 (Vibrio parahaemolyticus serotype O3:K6 (strain RIMD 2210633)).